Consider the following 142-residue polypeptide: Alpha-lactalbumin (142 aa).

An N-terminal signal peptide occupies residues 1–18; that stretch reads MMSFVSLLLVGILFHATQ. The C-type lysozyme domain occupies 20–142; sequence EQLTKCEVFR…KLDQWLCEKL (123 aa). 4 cysteine pairs are disulfide-bonded: C25-C139, C47-C130, C80-C96, and C92-C110. 2 N-linked (GlcNAc...) asparagine glycosylation sites follow: N64 and N93. Ca(2+) is bound by residues K98, D101, D103, D106, and D107.

This sequence belongs to the glycosyl hydrolase 22 family. Lactose synthase (LS) is a heterodimer of a catalytic component, beta1,4-galactosyltransferase (beta4Gal-T1) and a regulatory component, alpha-lactalbumin (LA). In terms of tissue distribution, mammary gland specific. Secreted in milk.

Its subcellular location is the secreted. Its function is as follows. Regulatory subunit of lactose synthase, changes the substrate specificity of galactosyltransferase in the mammary gland making glucose a good acceptor substrate for this enzyme. This enables LS to synthesize lactose, the major carbohydrate component of milk. In other tissues, galactosyltransferase transfers galactose onto the N-acetylglucosamine of the oligosaccharide chains in glycoproteins. The sequence is that of Alpha-lactalbumin (LALBA) from Bubalus bubalis (Domestic water buffalo).